A 153-amino-acid chain; its full sequence is Cofilin (153 aa).

In terms of domain architecture, ADF-H spans 4–148 (SGATVSQDCI…EYDSILKTVS (145 aa)).

This sequence belongs to the actin-binding proteins ADF family.

Its subcellular location is the cytoplasm. It localises to the cytoskeleton. The protein resides in the nucleus matrix. Its function is as follows. Controls reversibly actin polymerization and depolymerization in a pH-sensitive manner. It has the ability to bind G- and F-actin in a 1:1 ratio of cofilin to actin. Binding to F-actin is regulated by tropomyosin. It is the major component of intranuclear and cytoplasmic actin rods. Required for accumulation of actin at the cell division site via depolymerizing actin at the cell ends. In association with myosin II has a role in the assembly of the contractile ring via severing actin filaments. Involved in the maintenance of the contractile ring once formed. In association with profilin and capping protein, has a role in the mitotic reorganization of the actin cytoskeleton. The polypeptide is Cofilin (COF1) (Gibberella zeae (strain ATCC MYA-4620 / CBS 123657 / FGSC 9075 / NRRL 31084 / PH-1) (Wheat head blight fungus)).